We begin with the raw amino-acid sequence, 120 residues long: Guanidine hydrolase-activating protein A (120 aa).

Ni(2+) contacts are provided by histidine 2, glutamate 3, and glutamate 41. Zn(2+) is bound by residues cysteine 74, cysteine 77, cysteine 91, and cysteine 94.

It belongs to the HypA/HybF family.

Its function is as follows. Involved in the maturation of the nickel-dependent guanidine hydrolase GdmH. Required for nickel insertion into the metal center of GdmH. Seems to be required only for GdmH activation and not for activity. This is Guanidine hydrolase-activating protein A from Synechocystis sp. (strain ATCC 27184 / PCC 6803 / Kazusa).